The chain runs to 59 residues: Large ribosomal subunit protein bL32 (59 aa).

Positions 1 to 20 are disordered; that stretch reads MAVPRNRHSNARKNIRRSHH.

It belongs to the bacterial ribosomal protein bL32 family.

The chain is Large ribosomal subunit protein bL32 (rpmF) from Chlamydia muridarum (strain MoPn / Nigg).